The following is a 236-amino-acid chain: 3-deoxy-D-manno-octulosonic acid kinase (236 aa).

D167 is a catalytic residue.

The protein belongs to the protein kinase superfamily. KdkA/RfaP family.

It localises to the cell inner membrane. It carries out the reaction an alpha-Kdo-(2-&gt;6)-lipid IVA + ATP = a 4-O-phospho-alpha-Kdo-(2-&gt;6)-lipid IVA + ADP + H(+). It functions in the pathway bacterial outer membrane biogenesis; LPS core biosynthesis. In terms of biological role, catalyzes the ATP-dependent phosphorylation of the 3-deoxy-D-manno-octulosonic acid (Kdo) residue in Kdo-lipid IV(A) at the 4-OH position. The sequence is that of 3-deoxy-D-manno-octulosonic acid kinase from Vibrio vulnificus (strain YJ016).